A 187-amino-acid polypeptide reads, in one-letter code: Probable RNA 2'-phosphotransferase (187 aa).

The protein belongs to the KptA/TPT1 family.

Removes the 2'-phosphate from RNA via an intermediate in which the phosphate is ADP-ribosylated by NAD followed by a presumed transesterification to release the RNA and generate ADP-ribose 1''-2''-cyclic phosphate (APPR&gt;P). May function as an ADP-ribosylase. The sequence is that of Probable RNA 2'-phosphotransferase from Pseudomonas syringae pv. tomato (strain ATCC BAA-871 / DC3000).